The following is a 265-amino-acid chain: 3-methyl-2-oxobutanoate hydroxymethyltransferase (265 aa).

Positions 44 and 83 each coordinate Mg(2+). 3-methyl-2-oxobutanoate contacts are provided by residues 44 to 45 (DS), D83, and K113. Mg(2+) is bound at residue E115. E183 functions as the Proton acceptor in the catalytic mechanism.

This sequence belongs to the PanB family. In terms of assembly, homodecamer; pentamer of dimers. The cofactor is Mg(2+).

It is found in the cytoplasm. It catalyses the reaction 3-methyl-2-oxobutanoate + (6R)-5,10-methylene-5,6,7,8-tetrahydrofolate + H2O = 2-dehydropantoate + (6S)-5,6,7,8-tetrahydrofolate. It functions in the pathway cofactor biosynthesis; (R)-pantothenate biosynthesis; (R)-pantoate from 3-methyl-2-oxobutanoate: step 1/2. Functionally, catalyzes the reversible reaction in which hydroxymethyl group from 5,10-methylenetetrahydrofolate is transferred onto alpha-ketoisovalerate to form ketopantoate. The sequence is that of 3-methyl-2-oxobutanoate hydroxymethyltransferase from Leptospira borgpetersenii serovar Hardjo-bovis (strain JB197).